A 648-amino-acid chain; its full sequence is 1-deoxy-D-xylulose-5-phosphate synthase (648 aa).

Residues histidine 72 and 113 to 115 (GHA) contribute to the thiamine diphosphate site. Mg(2+) is bound at residue aspartate 144. Thiamine diphosphate contacts are provided by residues 145 to 146 (GA), asparagine 173, and glutamate 363. Asparagine 173 contacts Mg(2+).

Belongs to the transketolase family. DXPS subfamily. In terms of assembly, homodimer. Requires Mg(2+) as cofactor. The cofactor is thiamine diphosphate.

It carries out the reaction D-glyceraldehyde 3-phosphate + pyruvate + H(+) = 1-deoxy-D-xylulose 5-phosphate + CO2. It participates in metabolic intermediate biosynthesis; 1-deoxy-D-xylulose 5-phosphate biosynthesis; 1-deoxy-D-xylulose 5-phosphate from D-glyceraldehyde 3-phosphate and pyruvate: step 1/1. In terms of biological role, catalyzes the acyloin condensation reaction between C atoms 2 and 3 of pyruvate and glyceraldehyde 3-phosphate to yield 1-deoxy-D-xylulose-5-phosphate (DXP). In Symbiobacterium thermophilum (strain DSM 24528 / JCM 14929 / IAM 14863 / T), this protein is 1-deoxy-D-xylulose-5-phosphate synthase.